Here is a 296-residue protein sequence, read N- to C-terminus: tRNA dimethylallyltransferase (296 aa).

Residue 11–18 (GPTAVGKT) coordinates ATP. Position 13 to 18 (13 to 18 (TAVGKT)) interacts with substrate. The segment at 36–39 (DSQQ) is interaction with substrate tRNA.

It belongs to the IPP transferase family. In terms of assembly, monomer. Mg(2+) serves as cofactor.

It catalyses the reaction adenosine(37) in tRNA + dimethylallyl diphosphate = N(6)-dimethylallyladenosine(37) in tRNA + diphosphate. Its function is as follows. Catalyzes the transfer of a dimethylallyl group onto the adenine at position 37 in tRNAs that read codons beginning with uridine, leading to the formation of N6-(dimethylallyl)adenosine (i(6)A). In Streptococcus equi subsp. equi (strain 4047), this protein is tRNA dimethylallyltransferase.